The primary structure comprises 474 residues: Adenosylhomocysteinase (474 aa).

Residues T61, D136, and E196 each coordinate substrate. NAD(+) is bound at residue T197 to T199. Substrate-binding residues include K226 and D230. Residues N231, G260–G265, E283, N318, I339–H341, and N384 contribute to the NAD(+) site.

This sequence belongs to the adenosylhomocysteinase family. Requires NAD(+) as cofactor.

It localises to the cytoplasm. It catalyses the reaction S-adenosyl-L-homocysteine + H2O = L-homocysteine + adenosine. It participates in amino-acid biosynthesis; L-homocysteine biosynthesis; L-homocysteine from S-adenosyl-L-homocysteine: step 1/1. Its function is as follows. May play a key role in the regulation of the intracellular concentration of adenosylhomocysteine. The protein is Adenosylhomocysteinase of Ralstonia nicotianae (strain ATCC BAA-1114 / GMI1000) (Ralstonia solanacearum).